The chain runs to 738 residues: 1,4-alpha-glucan branching enzyme GlgB (738 aa).

Asp399 functions as the Nucleophile in the catalytic mechanism. Residue Glu452 is the Proton donor of the active site.

It belongs to the glycosyl hydrolase 13 family. GlgB subfamily. In terms of assembly, monomer.

The catalysed reaction is Transfers a segment of a (1-&gt;4)-alpha-D-glucan chain to a primary hydroxy group in a similar glucan chain.. It functions in the pathway glycan biosynthesis; glycogen biosynthesis. In terms of biological role, catalyzes the formation of the alpha-1,6-glucosidic linkages in glycogen by scission of a 1,4-alpha-linked oligosaccharide from growing alpha-1,4-glucan chains and the subsequent attachment of the oligosaccharide to the alpha-1,6 position. This Chlamydia trachomatis serovar A (strain ATCC VR-571B / DSM 19440 / HAR-13) protein is 1,4-alpha-glucan branching enzyme GlgB.